Here is a 166-residue protein sequence, read N- to C-terminus: Interferon gamma (166 aa).

The signal sequence occupies residues 1 to 23 (MKYTSYFLALQLCLLLGFSGSYG). Gln24 carries the pyrrolidone carboxylic acid modification. N-linked (GlcNAc...) asparagine glycans are attached at residues Asn39 and Asn106.

It belongs to the type II (or gamma) interferon family. As to quaternary structure, homodimer. Interacts with IFNGR1 (via extracellular domain); this interaction promotes IFNGR1 dimerization. In terms of tissue distribution, released primarily from activated T lymphocytes.

It is found in the secreted. In terms of biological role, type II interferon produced by immune cells such as T-cells and NK cells that plays crucial roles in antimicrobial, antiviral, and antitumor responses by activating effector immune cells and enhancing antigen presentation. Primarily signals through the JAK-STAT pathway after interaction with its receptor IFNGR1 to affect gene regulation. Upon IFNG binding, IFNGR1 intracellular domain opens out to allow association of downstream signaling components JAK2, JAK1 and STAT1, leading to STAT1 activation, nuclear translocation and transcription of IFNG-regulated genes. Many of the induced genes are transcription factors such as IRF1 that are able to further drive regulation of a next wave of transcription. Plays a role in class I antigen presentation pathway by inducing a replacement of catalytic proteasome subunits with immunoproteasome subunits. In turn, increases the quantity, quality, and repertoire of peptides for class I MHC loading. Increases the efficiency of peptide generation also by inducing the expression of activator PA28 that associates with the proteasome and alters its proteolytic cleavage preference. Up-regulates as well MHC II complexes on the cell surface by promoting expression of several key molecules such as cathepsins B/CTSB, H/CTSH, and L/CTSL. Participates in the regulation of hematopoietic stem cells during development and under homeostatic conditions by affecting their development, quiescence, and differentiation. This chain is Interferon gamma (IFNG), found in Moschus berezovskii (Chinese forest musk deer).